The chain runs to 215 residues: Ependymin-2 (215 aa).

The N-terminal stretch at Met-1–Ala-20 is a signal peptide. Residues Asn-71 and Asn-94 are each glycosylated (N-linked (GlcNAc...) asparagine).

This sequence belongs to the ependymin family. Forms disulfide-linked dimers. Post-translationally, different glycosylation variants are known as EPD-beta and EPD-gamma. Binds calcium through the terminal sialic acids. In terms of tissue distribution, EPDs are synthesized in the meninx and secreted in the cerebrospinal fluid.

The protein localises to the secreted. Its function is as follows. May play a role in neural plasticity. May be involved during axon regeneration. In Carassius auratus (Goldfish), this protein is Ependymin-2 (epd2).